The primary structure comprises 291 residues: Homoserine kinase (291 aa).

80–90 (RPASGLGSSAA) is an ATP binding site.

Belongs to the GHMP kinase family. Homoserine kinase subfamily.

The protein resides in the cytoplasm. It catalyses the reaction L-homoserine + ATP = O-phospho-L-homoserine + ADP + H(+). The protein operates within amino-acid biosynthesis; L-threonine biosynthesis; L-threonine from L-aspartate: step 4/5. In terms of biological role, catalyzes the ATP-dependent phosphorylation of L-homoserine to L-homoserine phosphate. This Natronomonas pharaonis (strain ATCC 35678 / DSM 2160 / CIP 103997 / JCM 8858 / NBRC 14720 / NCIMB 2260 / Gabara) (Halobacterium pharaonis) protein is Homoserine kinase.